The chain runs to 426 residues: Tol-Pal system protein TolB (426 aa).

A signal peptide spans 1-25 (MNILLSRFRLLLAAALAALSWGAQA).

Belongs to the TolB family. As to quaternary structure, the Tol-Pal system is composed of five core proteins: the inner membrane proteins TolA, TolQ and TolR, the periplasmic protein TolB and the outer membrane protein Pal. They form a network linking the inner and outer membranes and the peptidoglycan layer.

It is found in the periplasm. In terms of biological role, part of the Tol-Pal system, which plays a role in outer membrane invagination during cell division and is important for maintaining outer membrane integrity. The chain is Tol-Pal system protein TolB from Aromatoleum aromaticum (strain DSM 19018 / LMG 30748 / EbN1) (Azoarcus sp. (strain EbN1)).